Here is a 163-residue protein sequence, read N- to C-terminus: Large ribosomal subunit protein bL21 (163 aa).

The tract at residues 124 to 163 (KETTKKTKATVSIKKTAKKPSEKKSAPQKKAAVVSNNKED) is disordered.

It belongs to the bacterial ribosomal protein bL21 family. In terms of assembly, part of the 50S ribosomal subunit. Contacts protein L20.

In terms of biological role, this protein binds to 23S rRNA in the presence of protein L20. In Bartonella quintana (strain Toulouse) (Rochalimaea quintana), this protein is Large ribosomal subunit protein bL21.